Consider the following 72-residue polypeptide: Translation initiation factor IF-1 (72 aa).

In terms of domain architecture, S1-like spans 1–72 (MAKEESIKMN…SKGRITYRAR (72 aa)).

This sequence belongs to the IF-1 family. Component of the 30S ribosomal translation pre-initiation complex which assembles on the 30S ribosome in the order IF-2 and IF-3, IF-1 and N-formylmethionyl-tRNA(fMet); mRNA recruitment can occur at any time during PIC assembly.

It localises to the cytoplasm. Functionally, one of the essential components for the initiation of protein synthesis. Stabilizes the binding of IF-2 and IF-3 on the 30S subunit to which N-formylmethionyl-tRNA(fMet) subsequently binds. Helps modulate mRNA selection, yielding the 30S pre-initiation complex (PIC). Upon addition of the 50S ribosomal subunit IF-1, IF-2 and IF-3 are released leaving the mature 70S translation initiation complex. This chain is Translation initiation factor IF-1, found in Alkalilimnicola ehrlichii (strain ATCC BAA-1101 / DSM 17681 / MLHE-1).